The primary structure comprises 294 residues: FAD-dependent monooxygenase SAT1 (294 aa).

D108 contributes to the FAD binding site.

It belongs to the paxM FAD-dependent monooxygenase family. Requires FAD as cofactor.

It functions in the pathway mycotoxin biosynthesis. Its function is as follows. FAD-dependent monooxygenase; part of the satratoxin SC1 cluster involved in the biosynthesis of satratoxins, trichothecene mycotoxins that are associated with human food poisonings. Satratoxins are suggested to be made by products of multiple gene clusters (SC1, SC2 and SC3) that encode 21 proteins in all, including polyketide synthases, acetyltransferases, and other enzymes expected to modify the trichothecene skeleton. SC1 encodes 10 proteins, SAT1 to SAT10. The largest are SAT8, which encodes a putative polyketide synthase (PKS) with a conventional non-reducing architecture, and SAT10, a putative protein containing four ankyrin repeats and thus may be involved in protein scaffolding. The putative short-chain reductase SAT3 may assist the PKS in some capacity. SAT6 contains a secretory lipase domain and acts probably as a trichothecene esterase. SAT5 encodes a putative acetyltransferase, and so, with SAT6, may affect endogenous protection from toxicity. The probable transcription factor SAT9 may regulate the expression of the SC1 cluster. SC2 encodes proteins SAT11 to SAT16, the largest of which encodes the putative reducing PKS SAT13. SAT11 is a cytochrome P450 monooxygenase, while SAT14 and SAT16 are probable acetyltransferases. The SC2 cluster may be regulated by the transcription factor SAT15. SC3 is a small cluster that encodes 5 proteins, SAT17 to SAT21. SAT21 is a putative MFS-type transporter which may have a role in exporting secondary metabolites. The four other proteins putatively encoded in SC3 include the taurine hydroxylase-like protein SAT17, the O-methyltransferase SAT18, the acetyltransferase SAT19, and the Cys6-type zinc finger SAT20, the latter being probably involved in regulation of SC3 expression. The polypeptide is FAD-dependent monooxygenase SAT1 (Stachybotrys chartarum (strain CBS 109288 / IBT 7711) (Toxic black mold)).